The primary structure comprises 298 residues: Probable 3-hydroxyacyl-CoA dehydrogenase F54C8.1 (298 aa).

It belongs to the 3-hydroxyacyl-CoA dehydrogenase family. As to quaternary structure, homodimer.

The protein localises to the mitochondrion matrix. It carries out the reaction a (3S)-3-hydroxyacyl-CoA + NAD(+) = a 3-oxoacyl-CoA + NADH + H(+). The protein operates within lipid metabolism; fatty acid beta-oxidation. The polypeptide is Probable 3-hydroxyacyl-CoA dehydrogenase F54C8.1 (Caenorhabditis elegans).